Here is a 313-residue protein sequence, read N- to C-terminus: MSDTFEPIRIVALYHFTPFEDPAALRGPLLELCEKEGIKGILLLAREGINGTIAGTDEGMERVMAHIRALPGCADLESKDSRAPELPFRRMKVRLKKEIVTMGEPDIDPRQGVGRYVAPEDWNALISDPDTILIDTRNDYEVAIGTFKGAEDPKTKSFREFPEWFRRRRQELEAKGRLPKIAMFCTGGIRCEKSTSFARAEGVDEVYHLKGGILKYLETVPEEESLWEGECFVFDQRVSVKHGLEIGTHDVCHACRRPLNEKDKASPLFVQGVSCPHCHNERTEEQRHRYAERERQEALAQARRAGHLGVRQK.

A Rhodanese domain is found at 127–225; it reads SDPDTILIDT…YLETVPEEES (99 aa). The active-site Cysteine persulfide intermediate is cysteine 185.

The protein belongs to the TrhO family.

It catalyses the reaction uridine(34) in tRNA + AH2 + O2 = 5-hydroxyuridine(34) in tRNA + A + H2O. Catalyzes oxygen-dependent 5-hydroxyuridine (ho5U) modification at position 34 in tRNAs. The protein is tRNA uridine(34) hydroxylase of Gluconobacter oxydans (strain 621H) (Gluconobacter suboxydans).